A 76-amino-acid polypeptide reads, in one-letter code: Conotoxin Vc6.6 (76 aa).

Residues 1–22 form the signal peptide; sequence MKLTCMVIVAVLFLTANTFVTA. A propeptide spanning residues 23–52 is cleaved from the precursor; that stretch reads VPHSSNALENLYLKAHHEMNNPKDSELNKR. Disulfide bonds link Cys-53-Cys-67, Cys-60-Cys-71, and Cys-66-Cys-75.

Belongs to the conotoxin O1 superfamily. Expressed by the venom duct.

The protein localises to the secreted. This Conus victoriae (Queen Victoria cone) protein is Conotoxin Vc6.6.